A 138-amino-acid polypeptide reads, in one-letter code: Putative protein encoded by LINC02912 (138 aa).

The next 2 membrane-spanning stretches (helical) occupy residues 32–52 (FALSFLIGKMGIIILSVCLIC) and 65–85 (CLINVSFSLYSCFIVFVTISQ). Residues 109–138 (SGGQSQHSWPCPERSKNLPQVSKQLRNRAG) form a disordered region.

It localises to the membrane. The chain is Putative protein encoded by LINC02912 from Homo sapiens (Human).